Here is a 292-residue protein sequence, read N- to C-terminus: 4-hydroxy-tetrahydrodipicolinate synthase (292 aa).

Thr45 lines the pyruvate pocket. Tyr133 (proton donor/acceptor) is an active-site residue. Lys161 functions as the Schiff-base intermediate with substrate in the catalytic mechanism. Pyruvate is bound at residue Ile203.

The protein belongs to the DapA family. As to quaternary structure, homotetramer; dimer of dimers.

The protein localises to the cytoplasm. It catalyses the reaction L-aspartate 4-semialdehyde + pyruvate = (2S,4S)-4-hydroxy-2,3,4,5-tetrahydrodipicolinate + H2O + H(+). The protein operates within amino-acid biosynthesis; L-lysine biosynthesis via DAP pathway; (S)-tetrahydrodipicolinate from L-aspartate: step 3/4. Functionally, catalyzes the condensation of (S)-aspartate-beta-semialdehyde [(S)-ASA] and pyruvate to 4-hydroxy-tetrahydrodipicolinate (HTPA). In Dechloromonas aromatica (strain RCB), this protein is 4-hydroxy-tetrahydrodipicolinate synthase.